The sequence spans 275 residues: Large ribosomal subunit protein uL2 (275 aa).

Disordered regions lie at residues 28–49 (APHA…HGRI) and 224–246 (AMNP…NPHP).

Belongs to the universal ribosomal protein uL2 family. In terms of assembly, part of the 50S ribosomal subunit. Forms a bridge to the 30S subunit in the 70S ribosome.

Functionally, one of the primary rRNA binding proteins. Required for association of the 30S and 50S subunits to form the 70S ribosome, for tRNA binding and peptide bond formation. It has been suggested to have peptidyltransferase activity; this is somewhat controversial. Makes several contacts with the 16S rRNA in the 70S ribosome. This is Large ribosomal subunit protein uL2 from Stenotrophomonas maltophilia (strain R551-3).